The following is a 933-amino-acid chain: Progesterone receptor (933 aa).

Residues 1–164 (MTELKAKGPR…PATQGVLSPL (164 aa)) are AF3; mediates transcriptional activation. Residues 1-256 (MTELKAKGPR…AAAGGGAAAV (256 aa)) are disordered. The tract at residues 1-566 (MTELKAKGPR…YSFESLPQKI (566 aa)) is modulating, Pro-Rich. S20 is subject to Phosphoserine. The short motif at 55–59 (LDGLL) is the LXXL motif 1 element. Position 81 is a phosphoserine (S81). An LXXL motif 2 motif is present at residues 115-119 (LDTLL). Phosphoserine is present on residues S130 and S162. Residues 165 to 305 (MSRSGCKAGD…LATTMMDFIH (141 aa)) are mediates transcriptional transrepression. Residues 183–187 (KVLPR) carry the Nuclear localization signal motif. Phosphoserine is present on residues S190 and S213. Residues 220–231 (EVEEEDGSESEE) are compositionally biased toward acidic residues. Residues 232–246 (SAGPLLKGKPRALGG) show a composition bias toward low complexity. Phosphoserine; by MAPK1 is present on S294. The interval 331–378 (GGAGAASAFAPPRSSPSASSTPVAVGDFPDCAYPPDAEPKDDAYPLYS) is disordered. A compositionally biased stretch (low complexity) spans 335–350 (AASAFAPPRSSPSASS). S345 carries the post-translational modification Phosphoserine; by MAPK. K388 is covalently cross-linked (Glycyl lysine isopeptide (Lys-Gly) (interchain with G-Cter in SUMO); alternate). Residue K388 forms a Glycyl lysine isopeptide (Lys-Gly) (interchain with G-Cter in ubiquitin); alternate linkage. The residue at position 400 (S400) is a Phosphoserine; by CDK2. The segment at 415–452 (PDFPLGPPPPLPPRAPPSRPGEAAVTAAPASASVSSAS) is disordered. The segment covering 418–433 (PLGPPPPLPPRAPPSR) has biased composition (pro residues). Positions 434–452 (PGEAAVTAAPASASVSSAS) are enriched in low complexity. An AF1; mediates transcriptional activation region spans residues 456-546 (STLECILYKA…VYPPYLNYLR (91 aa)). K531 is covalently cross-linked (Glycyl lysine isopeptide (Lys-Gly) (interchain with G-Cter in SUMO)). 2 NR C4-type zinc fingers span residues 567-587 (CLICGDEASGCHYGVLTCGSC) and 603-627 (CAGRNDCIVDKIRRKNCPACRLRKC). A DNA-binding region (nuclear receptor) is located at residues 567–639 (CLICGDEASG…AGMVLGGRKF (73 aa)). The residue at position 676 (S676) is a Phosphoserine. The 235-residue stretch at 679–913 (QDIQLIPPLI…EFPEMMSEVI (235 aa)) folds into the NR LBD domain. The interval 687 to 933 (LINLLMSIEP…MVKPLLFHKK (247 aa)) is AF2; mediates transcriptional activation. A progesterone-binding site is contributed by R766.

The protein belongs to the nuclear hormone receptor family. Interacts with SMARD1 and UNC45A. Interacts with CUEDC2; the interaction promotes ubiquitination, decreases sumoylation, and represses transcriptional activity. Interacts with PIAS3; the interaction promotes sumoylation of PR in a hormone-dependent manner, inhibits DNA-binding, and alters nuclear export. Interacts with SP1; the interaction requires ligand-induced phosphorylation on Ser-345 by ERK1/2-MAPK. Interacts with PRMT2. Interacts with NCOA2 and NCOA1. Interacts with KLF9. Interacts with GTF2B. In terms of processing, phosphorylated on multiple serine sites. Several of these sites are hormone-dependent. Phosphorylation on Ser-294 is highly hormone-dependent and modulates ubiquitination and sumoylation on Lys-388. Phosphorylation on Ser-102 and Ser-345 also requires induction by hormone. Basal phosphorylation on Ser-81, Ser-162, Ser-190 and Ser-400 is increased in response to progesterone and can be phosphorylated in vitro by the CDK2-A1 complex. Increased levels of phosphorylation on Ser-400 also in the presence of EGF, heregulin, IGF, PMA and FBS. Phosphorylation at this site by CDK2 is ligand-independent, and increases nuclear translocation and transcriptional activity. Phosphorylation at Ser-162 and Ser-294, but not at Ser-190, is impaired during the G(2)/M phase of the cell cycle. Phosphorylation on Ser-345 by ERK1/2 MAPK is required for interaction with SP1. Sumoylation is hormone-dependent and represses transcriptional activity. Sumoylation on all three sites is enhanced by PIAS3. Desumoylated by SENP1. Sumoylation on Lys-388, the main site of sumoylation, is repressed by ubiquitination on the same site, and modulated by phosphorylation at Ser-294. Post-translationally, ubiquitination is hormone-dependent and represses sumoylation on the same site. Promoted by MAPK-mediated phosphorylation on Ser-294. Ubiquitinated by UBR5, leading to its degradation: UBR5 specifically recognizes and binds ligand-bound PGR when it is not associated with coactivators (NCOAs). In presence of NCOAs, the UBR5-degron is not accessible, preventing its ubiquitination and degradation. In terms of processing, palmitoylated by ZDHHC7 and ZDHHC21. Palmitoylation is required for plasma membrane targeting and for rapid intracellular signaling via ERK and AKT kinases and cAMP generation.

It localises to the nucleus. It is found in the cytoplasm. The steroid hormones and their receptors are involved in the regulation of eukaryotic gene expression and affect cellular proliferation and differentiation in target tissues. Transcriptional activator of several progesteron-dependent promoters in a variety of cell types. Involved in activation of SRC-dependent MAPK signaling on hormone stimulation. This is Progesterone receptor (PGR) from Pan paniscus (Pygmy chimpanzee).